Consider the following 136-residue polypeptide: Large ribosomal subunit protein uL3 (136 aa).

At glutamine 83 the chain carries N5-methylglutamine.

Belongs to the universal ribosomal protein uL3 family. In terms of assembly, part of the 50S ribosomal subunit. Forms a cluster with proteins L14 and L19. Post-translationally, methylated by PrmB.

One of the primary rRNA binding proteins, it binds directly near the 3'-end of the 23S rRNA, where it nucleates assembly of the 50S subunit. This is Large ribosomal subunit protein uL3 (rplC) from Carsonella ruddii.